Reading from the N-terminus, the 117-residue chain is Anti-adapter protein IraM (117 aa).

This sequence belongs to the IraM/RssC family.

The protein localises to the cytoplasm. In terms of biological role, involved in the stabilization of the sigma stress factor RpoS. This Klebsiella pneumoniae (strain 342) protein is Anti-adapter protein IraM.